Consider the following 684-residue polypeptide: MLDKLNQPKGSTIGVLKDGRTIQEAFDSLGYLGVAVLSPANYGAKGDGKADDTIPLRQCVQDACALGGRVVGTVGAEYKISGTIAGTVGDGKYVELDFTGSKFVPTTDDAVMTITGVATSPVAEVTVEVVSVNLGNGSTNTIAMKVTAPGGHSFTKKGEIGKAWSPVLCLNNDLSTQYAGEPFVVGLVESSTVFYTTSVFTELYMGTSLKVIRVPTTQVVVKGLDVESEWTTGWKASTLTLSGLLRPFVYKPKCKNINGPFVNLTGCYGATVFLPEGDNLRNAPSEGAYGYFVNDSASFGSTIYGINCTNARHAYTTSSPRSEPTDDKWWLKGRTLFSEITNGLGTGCHNAFDTHSPSYGIKFTNCRAVGDFRGVDTGGAGFQIRGDRSSLVDCTAINSKIGAAFTAVNISGNSELYISGFTYEGPAGHLALSLSGKAGQINRVTISDSRWKTLEQYATAITNVEVSASNVEAVVDSATTASAAWRIGEGATLRTRGGAARFSAGSGHSVISLAASGAKVDVGDLEVTGSSFMQYLLATLSQYAGDVYIEADLDGALPGNPVGGGGTDLKAAVVYTAGNKFRRPLAYRALTIGNANGNTLGLNYSGHDVITWEITATVAGANVNGITPGAFIGQQLNIGSSPASTQQLIIKNGTNIAMGHAVTLEAGRGVTLYWNGANWRSGSV.

In the N-terminal section; belongs to the Przondovirus depolymerase 2 family. As to quaternary structure, homotrimer. Interacts (via N-terminus) with depolymerase 1 (via N-terminus); this interaction probably gives rise to a branched tailspike.

The protein resides in the virion. In terms of biological role, functions as a receptor binding protein (RBP) and probably mediates the attachment to the host capsular exopolysaccharides. Displays a depolymerase activity that specifically degrades the K5-type polysaccharides of Klebsiella pneumoniae capsule, which allows the phage to reach the host cell membrane and bind the entry receptor. This is Depolymerase 2, capsule K5-specific from Klebsiella phage K5-4 (Bacteriophage K5-4).